Here is a 264-residue protein sequence, read N- to C-terminus: S-adenosylmethionine decarboxylase proenzyme (264 aa).

The active-site Schiff-base intermediate with substrate; via pyruvic acid is Ser-113. Residue Ser-113 is modified to Pyruvic acid (Ser); by autocatalysis. His-118 acts as the Proton acceptor; for processing activity in catalysis. The active-site Proton donor; for catalytic activity is the Cys-141.

This sequence belongs to the prokaryotic AdoMetDC family. Type 2 subfamily. In terms of assembly, heterooctamer of four alpha and four beta chains arranged as a tetramer of alpha/beta heterodimers. It depends on pyruvate as a cofactor. Post-translationally, is synthesized initially as an inactive proenzyme. Formation of the active enzyme involves a self-maturation process in which the active site pyruvoyl group is generated from an internal serine residue via an autocatalytic post-translational modification. Two non-identical subunits are generated from the proenzyme in this reaction, and the pyruvate is formed at the N-terminus of the alpha chain, which is derived from the carboxyl end of the proenzyme. The post-translation cleavage follows an unusual pathway, termed non-hydrolytic serinolysis, in which the side chain hydroxyl group of the serine supplies its oxygen atom to form the C-terminus of the beta chain, while the remainder of the serine residue undergoes an oxidative deamination to produce ammonia and the pyruvoyl group blocking the N-terminus of the alpha chain.

The catalysed reaction is S-adenosyl-L-methionine + H(+) = S-adenosyl 3-(methylsulfanyl)propylamine + CO2. Its pathway is amine and polyamine biosynthesis; S-adenosylmethioninamine biosynthesis; S-adenosylmethioninamine from S-adenosyl-L-methionine: step 1/1. Functionally, catalyzes the decarboxylation of S-adenosylmethionine to S-adenosylmethioninamine (dcAdoMet), the propylamine donor required for the synthesis of the polyamines spermine and spermidine from the diamine putrescine. The chain is S-adenosylmethionine decarboxylase proenzyme from Pseudomonas syringae pv. syringae (strain B728a).